Here is a 470-residue protein sequence, read N- to C-terminus: MTTLLKKEYNDVSYISGPLLFVNAASDLAYGAIVEIKDGTGRTRGGQVISVSDENAVIQVFEETRGLDLATASVSLVEDVARLGVSREMIGRRFDGLGRPIDGLPPVVAEKRLNINGEPMNPAARAKPEEFIQTGISTIDVNTSLIRGQKLPIFSGSGLPHNELAAQIARQAKVPGHEGDFAVVFAAMGLTQREVSFFTQEFERTGALARSVLFLNRADDPAVERLLTPRMALTTAEYLAFEHGYHVLVILTDMTNYCEALREIGGAREEIPGRRGFPGYMYTDLASLYERAGVVQGKPGSVTQIPILSMPDDDITHPIPDLTGYITEGQIVVDRGLNAKGIFPPINPLPSLSRLQGNGIGKGKTRADHKNVSDQLFAAYANGLDLRKLVAITGEDALTETDKLYLRFADDFEAYFIGQGDQDRSVEDSLTVAWAILSKLPQSQLTRLSKDAIDKYYGAKLDEMWRGNRI.

This sequence belongs to the ATPase alpha/beta chains family.

Functionally, produces ATP from ADP in the presence of a proton gradient across the membrane. The V-type beta chain is a regulatory subunit. In Deinococcus geothermalis (strain DSM 11300 / CIP 105573 / AG-3a), this protein is V-type ATP synthase beta chain.